Reading from the N-terminus, the 447-residue chain is Serine/threonine-protein kinase NLK2 (447 aa).

In terms of domain architecture, Protein kinase spans 60-349 (PEPDRPIGYG…AKDALAHPYL (290 aa)). ATP contacts are provided by residues 66 to 74 (IGYGAFGVV) and K89. D186 serves as the catalytic Proton acceptor.

The protein belongs to the protein kinase superfamily. CMGC Ser/Thr protein kinase family. MAP kinase subfamily. As to quaternary structure, interacts with sox11, hmgxb4/hmg2l1, rnf138/narf, stat3.1 and mef2a. Mg(2+) is required as a cofactor. Expressed widely in the ectoderm during early gastrula stage when neural induction is taking place. Expressed in the head region of neurula stage embryos. At the end of neurulation, expression becomes localized to the nervous system, and is restricted to the central nervous system, eye and head neural crest cells by the early tadpole stages.

It localises to the nucleus. Its subcellular location is the cytoplasm. It catalyses the reaction L-seryl-[protein] + ATP = O-phospho-L-seryl-[protein] + ADP + H(+). It carries out the reaction L-threonyl-[protein] + ATP = O-phospho-L-threonyl-[protein] + ADP + H(+). With respect to regulation, activated by tyrosine and threonine phosphorylation. Negatively regulates Wnt/beta-catenin-signaling during development. Plays a role together with sox11 in neural induction during early embryogenesis. Involved in TGFbeta-mediated mesoderm induction in early embryos, acting downstream of map3k7/tak1 to phosphorylate stat3.1. Augments the rnf138/narf-directed ubiquitination and degradation of tcf/lef by enhancing the association of rnf138/narf and tcf/lef. Phosphorylates mef2a to play a role in anterior neural development, including eye formation. The chain is Serine/threonine-protein kinase NLK2 (nlk.2) from Xenopus laevis (African clawed frog).